The following is a 397-amino-acid chain: Lysophospholipid transporter LplT (397 aa).

Over 1-17 (MSESVHTNTSLWSKGMK) the chain is Periplasmic. A helical membrane pass occupies residues 18–38 (AVIVAQFLSAFGDNALLFATL). The Cytoplasmic portion of the chain corresponds to 39 to 52 (ALLKAQFYPEWSQP). Residues 53–73 (ILQMVFVGAYILFAPFVGQVA) form a helical membrane-spanning segment. At 74-90 (DSFAKGRVMMFANGLKL) the chain is on the periplasmic side. Residues 91–111 (LGAASICFGINPFLGYTLVGV) form a helical membrane-spanning segment. The Cytoplasmic segment spans residues 112-144 (GAAAYSPAKYGILGELTTGSKLVKANGLMEAST). Residues 145–165 (IAAILLGSVAGGVLADWHVLV) traverse the membrane as a helical segment. Ala166 is a topological domain (periplasmic). Residues 167–187 (LAACALAYGGAVVANIYIPKL) traverse the membrane as a helical segment. Residues 188–226 (AAARPGQSWNLINMTRSFLNACTSLWRNGETRFSLVGTS) lie on the Cytoplasmic side of the membrane. Residues 227–247 (LFWGAGVTLRFLLVLWVPVAL) form a helical membrane-spanning segment. The Periplasmic portion of the chain corresponds to 248 to 256 (GITDNATPT). The helical transmembrane segment at 257–277 (YLNAMVAIGIVVGAGAAAKLV) threads the bilayer. The Cytoplasmic portion of the chain corresponds to 278-280 (TLE). Residues 281–301 (TVSRCMPAGILIGVVVLIFSL) traverse the membrane as a helical segment. The Periplasmic segment spans residues 302-304 (QHE). A helical membrane pass occupies residues 305 to 325 (LLPAYALLMLIGVLGGFFVVP). The Cytoplasmic segment spans residues 326–343 (LNALLQERGKKSVGAGNA). The chain crosses the membrane as a helical span at residues 344 to 364 (IAVQNLGENSAMLLMLGIYSL). At 365–366 (AV) the chain is on the periplasmic side. Residues 367–387 (MVGIPVVPIGIGFGTLFALAI) form a helical membrane-spanning segment. The Cytoplasmic segment spans residues 388 to 397 (TALWIWQRRH).

It belongs to the major facilitator superfamily. LplT (TC 2.A.1.42) family.

The protein localises to the cell inner membrane. In terms of biological role, catalyzes the facilitated diffusion of 2-acyl-glycero-3-phosphoethanolamine (2-acyl-GPE) into the cell. This is Lysophospholipid transporter LplT from Escherichia coli O9:H4 (strain HS).